The chain runs to 445 residues: Trigger factor (445 aa).

The PPIase FKBP-type domain maps to 162–247 (GDQVTIDAIG…IKAVHTAEPT (86 aa)).

Belongs to the FKBP-type PPIase family. Tig subfamily.

It localises to the cytoplasm. It catalyses the reaction [protein]-peptidylproline (omega=180) = [protein]-peptidylproline (omega=0). Its function is as follows. Involved in protein export. Acts as a chaperone by maintaining the newly synthesized protein in an open conformation. Functions as a peptidyl-prolyl cis-trans isomerase. This Rickettsia prowazekii (strain Madrid E) protein is Trigger factor (tig).